The chain runs to 308 residues: Pseudouridine-5'-phosphate glycosidase (308 aa).

E26 (proton donor) is an active-site residue. Substrate is bound by residues K87 and V107. A Mn(2+)-binding site is contributed by D139. Substrate is bound at residue 141-143 (SAD). K160 acts as the Nucleophile in catalysis.

This sequence belongs to the pseudouridine-5'-phosphate glycosidase family. In terms of assembly, homotrimer. Requires Mn(2+) as cofactor.

The enzyme catalyses D-ribose 5-phosphate + uracil = psi-UMP + H2O. Catalyzes the reversible cleavage of pseudouridine 5'-phosphate (PsiMP) to ribose 5-phosphate and uracil. Functions biologically in the cleavage direction, as part of a pseudouridine degradation pathway. This Legionella pneumophila subsp. pneumophila (strain Philadelphia 1 / ATCC 33152 / DSM 7513) protein is Pseudouridine-5'-phosphate glycosidase.